Reading from the N-terminus, the 652-residue chain is Acetyl-coenzyme A synthetase (652 aa).

CoA contacts are provided by residues 189-192 (RGGK), threonine 311, and asparagine 335. Residues 387-389 (GEP), 411-416 (DTWWQT), aspartate 500, and arginine 515 contribute to the ATP site. Serine 523 is a binding site for CoA. Residue arginine 526 participates in ATP binding. Mg(2+) is bound by residues valine 537, histidine 539, and valine 542. Arginine 584 lines the CoA pocket. Position 609 is an N6-acetyllysine (lysine 609).

Belongs to the ATP-dependent AMP-binding enzyme family. Requires Mg(2+) as cofactor. Acetylated. Deacetylation by the SIR2-homolog deacetylase activates the enzyme.

It carries out the reaction acetate + ATP + CoA = acetyl-CoA + AMP + diphosphate. Catalyzes the conversion of acetate into acetyl-CoA (AcCoA), an essential intermediate at the junction of anabolic and catabolic pathways. AcsA undergoes a two-step reaction. In the first half reaction, AcsA combines acetate with ATP to form acetyl-adenylate (AcAMP) intermediate. In the second half reaction, it can then transfer the acetyl group from AcAMP to the sulfhydryl group of CoA, forming the product AcCoA. In Rhizobium rhizogenes (strain K84 / ATCC BAA-868) (Agrobacterium radiobacter), this protein is Acetyl-coenzyme A synthetase.